A 157-amino-acid polypeptide reads, in one-letter code: Crossover junction endodeoxyribonuclease RuvC (157 aa).

Active-site residues include Asp7, Glu67, and Asp140. Mg(2+) is bound by residues Asp7, Glu67, and Asp140.

This sequence belongs to the RuvC family. As to quaternary structure, homodimer which binds Holliday junction (HJ) DNA. The HJ becomes 2-fold symmetrical on binding to RuvC with unstacked arms; it has a different conformation from HJ DNA in complex with RuvA. In the full resolvosome a probable DNA-RuvA(4)-RuvB(12)-RuvC(2) complex forms which resolves the HJ. The cofactor is Mg(2+).

It localises to the cytoplasm. The catalysed reaction is Endonucleolytic cleavage at a junction such as a reciprocal single-stranded crossover between two homologous DNA duplexes (Holliday junction).. Its function is as follows. The RuvA-RuvB-RuvC complex processes Holliday junction (HJ) DNA during genetic recombination and DNA repair. Endonuclease that resolves HJ intermediates. Cleaves cruciform DNA by making single-stranded nicks across the HJ at symmetrical positions within the homologous arms, yielding a 5'-phosphate and a 3'-hydroxyl group; requires a central core of homology in the junction. The consensus cleavage sequence is 5'-(A/T)TT(C/G)-3'. Cleavage occurs on the 3'-side of the TT dinucleotide at the point of strand exchange. HJ branch migration catalyzed by RuvA-RuvB allows RuvC to scan DNA until it finds its consensus sequence, where it cleaves and resolves the cruciform DNA. The polypeptide is Crossover junction endodeoxyribonuclease RuvC (Rickettsia typhi (strain ATCC VR-144 / Wilmington)).